The sequence spans 253 residues: tRNA pseudouridine synthase A (253 aa).

Asp53 functions as the Nucleophile in the catalytic mechanism. Substrate is bound at residue Tyr112.

Belongs to the tRNA pseudouridine synthase TruA family. As to quaternary structure, homodimer.

The enzyme catalyses uridine(38/39/40) in tRNA = pseudouridine(38/39/40) in tRNA. Functionally, formation of pseudouridine at positions 38, 39 and 40 in the anticodon stem and loop of transfer RNAs. In Lactococcus lactis subsp. lactis (strain IL1403) (Streptococcus lactis), this protein is tRNA pseudouridine synthase A.